The chain runs to 80 residues: Penaeidin-3 (80 aa).

An N-terminal signal peptide occupies residues 1–19 (MRLVVCLVYLVSFALVCQG). Gln20 is subject to Pyrrolidone carboxylic acid. 3 disulfide bridges follow: Cys54-Cys67, Cys57-Cys74, and Cys68-Cys75.

This sequence belongs to the penaeidin family. The N-terminus forms pyrrolidone carboxylic acid. In terms of tissue distribution, strongly expressed in hemocytes, and to a lesser extent in heart, muscle, gills, intestine and eyestalk. Lowest expression in hepatopancreas.

It is found in the cytoplasmic granule. In terms of biological role, antibacterial and antifungal activity. Presents chitin-binding activity. In Penaeus indicus (Indian white prawn), this protein is Penaeidin-3.